We begin with the raw amino-acid sequence, 533 residues long: Calcium uptake protein 1 homolog, mitochondrial (533 aa).

The transit peptide at 1 to 13 (MLRHNFRSSIFIR) directs the protein to the mitochondrion. The segment at 127–147 (PFRPEASQKEESTDSGTEIEV) is disordered. EF-hand domains are found at residues 270 to 305 (TSHA…IMSQ), 337 to 358 (KDGK…LQHD), and 465 to 500 (LSDH…RMRR). Residues Asp283, Asp285, Asn287, and Glu294 each contribute to the Ca(2+) site.

It belongs to the MICU1 family. MICU1 subfamily.

The protein localises to the mitochondrion intermembrane space. It localises to the mitochondrion inner membrane. Functionally, calcium sensor of the mitochondrial calcium uniporter (mcu-1) channel, which senses calcium level via its EF-hand domains. At low calcium levels, micu-1 occludes the pore of the mcu-1 channel, preventing mitochondrial calcium uptake. At higher calcium levels, calcium-binding to micu-1 induces a conformational change that weakens mcu-1-micu-1 interactions and moves micu-1 away from the pore, allowing calcium permeation through the mcu-1 channel. Also required to protect against manganese toxicity by preventing manganese uptake by mcu-1. Modulates the activity of the mitochondrial calcium uniporter protein mcu-1 depending on the level of intracellular calcium in PLM touch receptor neurons following axonal injury. This Caenorhabditis briggsae protein is Calcium uptake protein 1 homolog, mitochondrial.